The sequence spans 110 residues: UPF0102 protein HH_1751 (110 aa).

It belongs to the UPF0102 family.

This chain is UPF0102 protein HH_1751, found in Helicobacter hepaticus (strain ATCC 51449 / 3B1).